A 284-amino-acid polypeptide reads, in one-letter code: 2-dehydro-3-deoxyphosphooctonate aldolase (284 aa).

Belongs to the KdsA family.

It is found in the cytoplasm. It catalyses the reaction D-arabinose 5-phosphate + phosphoenolpyruvate + H2O = 3-deoxy-alpha-D-manno-2-octulosonate-8-phosphate + phosphate. It participates in carbohydrate biosynthesis; 3-deoxy-D-manno-octulosonate biosynthesis; 3-deoxy-D-manno-octulosonate from D-ribulose 5-phosphate: step 2/3. Its pathway is bacterial outer membrane biogenesis; lipopolysaccharide biosynthesis. The sequence is that of 2-dehydro-3-deoxyphosphooctonate aldolase from Burkholderia mallei (strain NCTC 10247).